Consider the following 204-residue polypeptide: bMERB domain-containing protein 1 (204 aa).

The region spanning leucine 3–aspartate 150 is the bMERB domain. The tract at residues valine 162–threonine 187 is disordered.

This Pongo abelii (Sumatran orangutan) protein is bMERB domain-containing protein 1 (BMERB1).